The chain runs to 134 residues: XXKLVESGXXLVQPGGSLRLSKXYTENVNHPATTTXYKXQPMTPDFTEXQTHEGTHQDVFDQPNLXXWKGNTLPEGYEPAKXGEXGTQDANPKXXQDGDEXTXTGXXQXDKIGRYNLXPTIFFEATPPKANENQ.

Residues 31-115 (PATTTXYKXQ…XXQXDKIGRY (85 aa)) form a disordered region. Basic and acidic residues predominate over residues 50 to 59 (QTHEGTHQDV).

The protein belongs to the zinc-containing alcohol dehydrogenase family.

The catalysed reaction is xylitol + NAD(+) = D-xylulose + NADH + H(+). Activated by calcium and inhibited by zinc. In Sus scrofa (Pig), this protein is D-xylulose reductase.